The primary structure comprises 344 residues: Ribosomal RNA large subunit methyltransferase Cfr (344 aa).

The Proton acceptor role is filled by E90. A Radical SAM core domain is found at 97-330; that stretch reads KQGWESFCIS…ATVRTQFGSE (234 aa). C104 and C335 are joined by a disulfide. [4Fe-4S] cluster-binding residues include C111, C115, and C118. Residues 157 to 158, S188, 211 to 213, and N292 contribute to the S-adenosyl-L-methionine site; these read GE and SLH. Catalysis depends on C335, which acts as the S-methylcysteine intermediate.

The protein belongs to the radical SAM superfamily. RlmN family. Cfr subfamily. [4Fe-4S] cluster serves as cofactor.

The protein localises to the cytoplasm. It carries out the reaction adenosine(2503) in 23S rRNA + 2 reduced [2Fe-2S]-[ferredoxin] + 2 S-adenosyl-L-methionine = 8-methyladenosine(2503) in 23S rRNA + 5'-deoxyadenosine + L-methionine + 2 oxidized [2Fe-2S]-[ferredoxin] + S-adenosyl-L-homocysteine. In terms of biological role, specifically methylates position 8 of adenine 2503 in 23S rRNA. Confers resistance to some classes of antibiotics. The polypeptide is Ribosomal RNA large subunit methyltransferase Cfr (Clostridium botulinum (strain Loch Maree / Type A3)).